We begin with the raw amino-acid sequence, 398 residues long: NADH-quinone oxidoreductase subunit D (398 aa).

Belongs to the complex I 49 kDa subunit family. NDH-1 is composed of 14 different subunits. Subunits NuoB, C, D, E, F, and G constitute the peripheral sector of the complex.

Its subcellular location is the cell inner membrane. It catalyses the reaction a quinone + NADH + 5 H(+)(in) = a quinol + NAD(+) + 4 H(+)(out). Functionally, NDH-1 shuttles electrons from NADH, via FMN and iron-sulfur (Fe-S) centers, to quinones in the respiratory chain. The immediate electron acceptor for the enzyme in this species is believed to be ubiquinone. Couples the redox reaction to proton translocation (for every two electrons transferred, four hydrogen ions are translocated across the cytoplasmic membrane), and thus conserves the redox energy in a proton gradient. The chain is NADH-quinone oxidoreductase subunit D from Rhodospirillum centenum (strain ATCC 51521 / SW).